Here is a 150-residue protein sequence, read N- to C-terminus: uncharacterized protein (150 aa).

It belongs to the OsmC/Ohr family.

This is an uncharacterized protein from Bacillus subtilis (strain 168).